We begin with the raw amino-acid sequence, 157 residues long: Neutrophil recruitment protein (157 aa).

A signal peptide spans 1 to 19 (MCSIWLTFFLSFLILNTKA).

The protein belongs to the PBP/GOBP family. In terms of assembly, interacts with mouse TLR1; the interaction promotes activation of canonical NF-kappa-B signaling in host macrophages. Interacts with human TLR1. Interacts with mouse TLR4; the interaction promotes activation of canonical NF-kappa-B signaling in host macrophages. Interacts with human TLR4. In terms of tissue distribution, female salivary gland (at protein level).

The protein localises to the secreted. Its function is as follows. Activates MyD88-dependent canonical NF-kappa-B signaling in host macrophages via interaction with host TLR1 and TLR4; this drives the expression of neutrophil chemoattractants, followed by the subsequent influx of neutrophils and recruitment of myeloid cells at the bite site. Functionally, (Microbial infection) Promotes Zika virus infection in mouse model by facilitating recruitment of flavivirus-permissive myeloid cells at the bite site. In terms of biological role, (Microbial infection) Promotes dengue virus infection in mouse model by facilitating recruitment of flavivirus-permissive myeloid cells at the bite site. This chain is Neutrophil recruitment protein, found in Aedes aegypti (Yellowfever mosquito).